The chain runs to 162 residues: Deoxyuridine 5'-triphosphate nucleotidohydrolase (162 aa).

Belongs to the dUTPase family. Homotrimer. Mg(2+) serves as cofactor.

It is found in the host cytoplasm. It localises to the virion. The catalysed reaction is dUTP + H2O = dUMP + diphosphate + H(+). Functionally, the viral dUTPase may play a role in lowering the dUTP concentration in natural infections to minimize misincorporation of deoxyuridine into the viral DNA and ensure the fidelity of genome replication. This is Deoxyuridine 5'-triphosphate nucleotidohydrolase from Ornithodoros (relapsing fever ticks).